Consider the following 740-residue polypeptide: Ethylene receptor 1 (740 aa).

A run of 3 helical transmembrane segments spans residues 23–43, 54–74, and 92–112; these read ISDF…IYFV, VLVQ…INLW, and VLTA…IPDL. Positions 65 and 69 each coordinate Cu cation. Residues 158 to 307 form the GAF domain; the sequence is DRHTILKTTL…VVADQVAVAL (150 aa). Residues 350-588 form the Histidine kinase domain; sequence VMNHEMRTPM…TFIVKLGIAD (239 aa). Histidine 353 is subject to Phosphohistidine; by autocatalysis. The region spanning 614-731 is the Response regulatory domain; sequence KVLVMDDNGV…KMRSVLSELI (118 aa). Aspartate 662 bears the 4-aspartylphosphate mark.

The protein belongs to the ethylene receptor family. As to quaternary structure, homodimer; disulfide-linked. Requires Cu cation as cofactor. In terms of processing, activation probably requires a transfer of a phosphate group between a His in the transmitter domain and an Asp of the receiver domain. In terms of tissue distribution, in seeds and placenta.

The protein localises to the endoplasmic reticulum membrane. The enzyme catalyses ATP + protein L-histidine = ADP + protein N-phospho-L-histidine.. Functionally, may act early in the ethylene signal transduction pathway, possibly as an ethylene receptor, or as a regulator of the pathway. This chain is Ethylene receptor 1 (ETR1), found in Cucumis melo var. cantalupensis (Netted muskmelon).